We begin with the raw amino-acid sequence, 443 residues long: Tol-Pal system protein TolB (443 aa).

The signal sequence occupies residues 1-33 (MKIGIINTKIRTVFSAFACMIAASLVCTMPARA).

The protein belongs to the TolB family. In terms of assembly, the Tol-Pal system is composed of five core proteins: the inner membrane proteins TolA, TolQ and TolR, the periplasmic protein TolB and the outer membrane protein Pal. They form a network linking the inner and outer membranes and the peptidoglycan layer.

It localises to the periplasm. Part of the Tol-Pal system, which plays a role in outer membrane invagination during cell division and is important for maintaining outer membrane integrity. This chain is Tol-Pal system protein TolB, found in Brucella anthropi (strain ATCC 49188 / DSM 6882 / CCUG 24695 / JCM 21032 / LMG 3331 / NBRC 15819 / NCTC 12168 / Alc 37) (Ochrobactrum anthropi).